A 706-amino-acid chain; its full sequence is MFKVFKKEIAGRVLEVEVGKLAQLSNGSCLLKYGQTAVLVNACASKSPREGIDFFPLSVDYEEKMYAAGKIPGGFIKREGRPSENAILTSRLIDRPIRPLFPDGYRNDVQIIATVLSVDIDCTPDIVAMLGSSIALSISDIPFQGPTASVHVGLVDGKLLINPTSDEREHSSLDLVVSGTKDAVMMIEAGANEVTEAQMLEAILFAHEEIKNIISFIEEIAAEVGKEKQEVVTLEINEDFETEVRAYAKTRISEAIRTVEKLERNAKIELANEETINYFYEKYQEELNLKQIHTILDSILKEETRNLILYDKKRPDDRQHDEIRPISCEVDLLPKTHGSGLFTRGQTQVLSIVTLGAIGDVQILDGLGKEESKRYMHHYNFPPYSVGETKMLRSPGRREIGHGALAERALEPMIPSQDDFPYAIRVVSEVLASNGSSSQASVCGSTLSLLDAGVPLKDMVAGIAMGLVKEGDAVAILSDIQGMEDHLGDMDFKVAGTAKGITAIQMDIKIKGIDEPILKDALEQARVGRLYILDKMKEAISSPRPELSPYAPRMLKMKIHPDKIREVIGSGGKTINKIIEDTGVKIDIENDGTIFIAAQTQEAGELALSIINNIVREPEIGDIFKGKVIKLMNFGAFVEILPGKEGLVHISNLAHERVNKVEDVLAVGDEIDVKVIEIDQQGKVSLSRKALLPKDNDKKQDDPQKA.

Positions 485 and 491 each coordinate Mg(2+). One can recognise a KH domain in the interval 552–611 (PRMLKMKIHPDKIREVIGSGGKTINKIIEDTGVKIDIENDGTIFIAAQTQEAGELALSII). An S1 motif domain is found at 621–689 (GDIFKGKVIK…QQGKVSLSRK (69 aa)).

It belongs to the polyribonucleotide nucleotidyltransferase family. It depends on Mg(2+) as a cofactor.

The protein localises to the cytoplasm. It carries out the reaction RNA(n+1) + phosphate = RNA(n) + a ribonucleoside 5'-diphosphate. Involved in mRNA degradation. Catalyzes the phosphorolysis of single-stranded polyribonucleotides processively in the 3'- to 5'-direction. This is Polyribonucleotide nucleotidyltransferase from Alkaliphilus oremlandii (strain OhILAs) (Clostridium oremlandii (strain OhILAs)).